The following is a 335-amino-acid chain: Glycerol-3-phosphate dehydrogenase [NAD(P)+] (335 aa).

S12, W13, H33, R34, and K108 together coordinate NADPH. Residues K108, G137, and T139 each contribute to the sn-glycerol 3-phosphate site. A141 lines the NADPH pocket. Sn-glycerol 3-phosphate contacts are provided by K192, D245, S255, R256, and N257. K192 (proton acceptor) is an active-site residue. Residue R256 participates in NADPH binding. Residue E282 coordinates NADPH.

It belongs to the NAD-dependent glycerol-3-phosphate dehydrogenase family.

It localises to the cytoplasm. The enzyme catalyses sn-glycerol 3-phosphate + NAD(+) = dihydroxyacetone phosphate + NADH + H(+). It carries out the reaction sn-glycerol 3-phosphate + NADP(+) = dihydroxyacetone phosphate + NADPH + H(+). It functions in the pathway membrane lipid metabolism; glycerophospholipid metabolism. Its function is as follows. Catalyzes the reduction of the glycolytic intermediate dihydroxyacetone phosphate (DHAP) to sn-glycerol 3-phosphate (G3P), the key precursor for phospholipid synthesis. This is Glycerol-3-phosphate dehydrogenase [NAD(P)+] from Methylococcus capsulatus (strain ATCC 33009 / NCIMB 11132 / Bath).